We begin with the raw amino-acid sequence, 450 residues long: MAEPTSTLSTATPAAPRISFVSLGCPKALVDSERIVTRLRAEGYELTRNHDGADLVIVNTCGFLDSAKAESLSAIGEALAENGKVVVTGCMGAEPEQIRAVHPSVLAITGPQQYESVLDAVHQAVPPKHDPFLDLVPEQGVKLTPRHYAYLKISEGCNNRCTFCIIPKLRGDLVSRPLNEVMREAEKLVAAGVKELLVISQDTSAYGVDLKYAESRWKDRDWATRFFDLADALGDLGAWVRLHYVYPYPHVDRVMELMASGKVLPYLDIPFQHASPTVLRRMKRPAAQEKTLARVLAWRDAVPDITLRSTFIVGFPGETEEEFQELLDFLDEAQLDRVGCFKFEPVAGAPANALENPVPDEVKAERYDRFMLKQQAISARRLKRKVGTRQQVIIDSVTPGGAIGRTKGDAPEIDGSVKIASRRPLRVGEIATVKIEAADAYDLIGSAVGF.

Positions 16-126 (PRISFVSLGC…VLDAVHQAVP (111 aa)) constitute an MTTase N-terminal domain. The [4Fe-4S] cluster site is built by Cys-25, Cys-61, Cys-90, Cys-157, Cys-161, and Cys-164. The region spanning 143 to 380 (LTPRHYAYLK…MLKQQAISAR (238 aa)) is the Radical SAM core domain. The 67-residue stretch at 383 to 449 (KRKVGTRQQV…AYDLIGSAVG (67 aa)) folds into the TRAM domain.

Belongs to the methylthiotransferase family. RimO subfamily. Requires [4Fe-4S] cluster as cofactor.

The protein localises to the cytoplasm. It carries out the reaction L-aspartate(89)-[ribosomal protein uS12]-hydrogen + (sulfur carrier)-SH + AH2 + 2 S-adenosyl-L-methionine = 3-methylsulfanyl-L-aspartate(89)-[ribosomal protein uS12]-hydrogen + (sulfur carrier)-H + 5'-deoxyadenosine + L-methionine + A + S-adenosyl-L-homocysteine + 2 H(+). Catalyzes the methylthiolation of an aspartic acid residue of ribosomal protein uS12. The sequence is that of Ribosomal protein uS12 methylthiotransferase RimO from Azorhizobium caulinodans (strain ATCC 43989 / DSM 5975 / JCM 20966 / LMG 6465 / NBRC 14845 / NCIMB 13405 / ORS 571).